The chain runs to 178 residues: ATP synthase subunit delta (178 aa).

The protein belongs to the ATPase delta chain family. As to quaternary structure, F-type ATPases have 2 components, F(1) - the catalytic core - and F(0) - the membrane proton channel. F(1) has five subunits: alpha(3), beta(3), gamma(1), delta(1), epsilon(1). F(0) has three main subunits: a(1), b(2) and c(10-14). The alpha and beta chains form an alternating ring which encloses part of the gamma chain. F(1) is attached to F(0) by a central stalk formed by the gamma and epsilon chains, while a peripheral stalk is formed by the delta and b chains.

It is found in the cell membrane. In terms of biological role, f(1)F(0) ATP synthase produces ATP from ADP in the presence of a proton or sodium gradient. F-type ATPases consist of two structural domains, F(1) containing the extramembraneous catalytic core and F(0) containing the membrane proton channel, linked together by a central stalk and a peripheral stalk. During catalysis, ATP synthesis in the catalytic domain of F(1) is coupled via a rotary mechanism of the central stalk subunits to proton translocation. This protein is part of the stalk that links CF(0) to CF(1). It either transmits conformational changes from CF(0) to CF(1) or is implicated in proton conduction. The polypeptide is ATP synthase subunit delta (Polynucleobacter asymbioticus (strain DSM 18221 / CIP 109841 / QLW-P1DMWA-1) (Polynucleobacter necessarius subsp. asymbioticus)).